The chain runs to 300 residues: Junctional adhesion molecule A (300 aa).

Positions 1–26 are cleaved as a signal peptide; the sequence is MGTEGKAGSKLLFLFTSMILGSLVQG. The Extracellular portion of the chain corresponds to 27–238; the sequence is KGSVYSPQTA…MEAVELNVGG (212 aa). Ig-like V-type domains are found at residues 28-122 and 134-228; these read GSVY…GEVS and PTVS…EAVR. Intrachain disulfides connect Cys-49–Cys-108 and Cys-152–Cys-212. Asn-185 carries an N-linked (GlcNAc...) asparagine glycan. Residues 239–259 form a helical membrane-spanning segment; sequence IVAAVLVTLILLGLLIFGIWF. The Cytoplasmic portion of the chain corresponds to 260-300; sequence AYSRGYFERTKKGTAPGKKVIYSQPSARSEGEFKQTSSFLV. Ser-282, Ser-285, and Ser-288 each carry phosphoserine.

The protein belongs to the immunoglobulin superfamily. Interacts with the ninth PDZ domain of MPDZ. Interacts with the first PDZ domain of PARD3. The association between PARD3 and PARD6B probably disrupts this interaction. Interacts with ITGAL (via I-domain). Interacts with CD151. Post-translationally, N-glycosylated.

The protein localises to the cell junction. It is found in the tight junction. It localises to the cell membrane. In terms of biological role, seems to play a role in epithelial tight junction formation. Appears early in primordial forms of cell junctions and recruits PARD3. The association of the PARD6-PARD3 complex may prevent the interaction of PARD3 with JAM1, thereby preventing tight junction assembly. Plays a role in regulating monocyte transmigration involved in integrity of epithelial barrier. Ligand for integrin alpha-L/beta-2 involved in memory T-cell and neutrophil transmigration. This Rattus norvegicus (Rat) protein is Junctional adhesion molecule A (F11r).